The chain runs to 189 residues: 3-hydroxyanthranilate 3,4-dioxygenase (189 aa).

Residue R46 participates in O2 binding. The Fe cation site is built by H50, E56, and H94. E56 serves as a coordination point for substrate. The substrate site is built by R98 and E109. Fe cation-binding residues include C124, C127, C161, and C164.

It belongs to the 3-HAO family. In terms of assembly, homodimer. Fe(2+) serves as cofactor.

It catalyses the reaction 3-hydroxyanthranilate + O2 = (2Z,4Z)-2-amino-3-carboxymuconate 6-semialdehyde. It participates in cofactor biosynthesis; NAD(+) biosynthesis; quinolinate from L-kynurenine: step 3/3. In terms of biological role, catalyzes the oxidative ring opening of 3-hydroxyanthranilate to 2-amino-3-carboxymuconate semialdehyde, which spontaneously cyclizes to quinolinate. In Shewanella woodyi (strain ATCC 51908 / MS32), this protein is 3-hydroxyanthranilate 3,4-dioxygenase.